The following is a 141-amino-acid chain: Nucleoside diphosphate kinase (141 aa).

The ATP site is built by Lys9, Phe57, Arg85, Thr91, Arg102, and Asn112. Residue His115 is the Pros-phosphohistidine intermediate of the active site.

Belongs to the NDK family. In terms of assembly, homotetramer. It depends on Mg(2+) as a cofactor.

Its subcellular location is the cytoplasm. The catalysed reaction is a 2'-deoxyribonucleoside 5'-diphosphate + ATP = a 2'-deoxyribonucleoside 5'-triphosphate + ADP. The enzyme catalyses a ribonucleoside 5'-diphosphate + ATP = a ribonucleoside 5'-triphosphate + ADP. Its function is as follows. Major role in the synthesis of nucleoside triphosphates other than ATP. The ATP gamma phosphate is transferred to the NDP beta phosphate via a ping-pong mechanism, using a phosphorylated active-site intermediate. The polypeptide is Nucleoside diphosphate kinase (Chlamydia muridarum (strain MoPn / Nigg)).